We begin with the raw amino-acid sequence, 443 residues long: Probable nitrate/nitrite antiporter NarK2 (443 aa).

The next 12 membrane-spanning stretches (helical) occupy residues 32–52 (ITTF…ALVV), 66–86 (LFWL…IWTF), 95–115 (HLVT…GFAV), 123–143 (WVLL…SGYM), 172–192 (IVQF…LLGG), 210–230 (NATF…WVYL), 256–276 (SLYI…PLLI), 292–312 (YAFL…PISD), 314–334 (LGGA…ALLV), 346–366 (FPMF…GNAS), 383–403 (VIGW…TLAA), and 409–429 (TGGF…NFFL).

This sequence belongs to the major facilitator superfamily. Nitrate/nitrite porter (TC 2.A.1.8) family.

It localises to the cell membrane. It carries out the reaction nitrate(in) + nitrite(out) = nitrate(out) + nitrite(in). Probable nitrate/nitrite antiporter that may be involved in nitrate import and nitrite export during anaerobic growth. The chain is Probable nitrate/nitrite antiporter NarK2 from Thermus thermophilus.